A 417-amino-acid polypeptide reads, in one-letter code: Tumor necrosis factor receptor superfamily member 25 (417 aa).

Residues 1–24 form the signal peptide; the sequence is MEQRPRGCAAVAAALLLVLLGARA. Residues 25-199 lie on the Extracellular side of the membrane; that stretch reads QGGTRSPRCD…RCAAVCGWRQ (175 aa). 4 TNFR-Cys repeats span residues 34 to 71, 72 to 115, 116 to 163, and 164 to 192; these read DCAG…STCL, VCPQ…DTRC, GCKP…TDCG, and TCLP…ERCA. 12 disulfides stabilise this stretch: C35-C47, C48-C61, C51-C70, C73-C89, C92-C107, C95-C115, C117-C130, C138-C155, C141-C162, C165-C176, C179-C191, and C187-C195. N-linked (GlcNAc...) asparagine glycosylation is present at N67. The N-linked (GlcNAc...) asparagine glycan is linked to N106. The helical transmembrane segment at 200-220 threads the bilayer; sequence MFWVQVLLAGLVVPLLLGATL. Over 221 to 417 the chain is Cytoplasmic; that stretch reads TYTYRHCWPH…DLRSRLQRGP (197 aa). Positions 332–413 constitute a Death domain; that stretch reads GPQLYDVMDA…GCVEDLRSRL (82 aa). R352 carries a (Microbial infection) N-beta-linked (GlcNAc) arginine glycan.

In terms of assembly, homodimer. Interacts strongly via the death domains with TNFRSF1 and TRADD to activate at least two distinct signaling cascades, apoptosis and NF-kappa-B signaling. Interacts with BAG4. Post-translationally, (Microbial infection) Glycosylated at Arg-352 by enteropathogenic E.coli protein NleB1. Glycosylated. Abundantly expressed in thymocytes and lymphocytes. Detected in lymphocyte-rich tissues such as thymus, colon, intestine, and spleen. Also found in the prostate.

Its subcellular location is the cell membrane. The protein resides in the secreted. In terms of biological role, receptor for TNFSF12/APO3L/TWEAK. Interacts directly with the adapter TRADD. Mediates activation of NF-kappa-B and induces apoptosis. May play a role in regulating lymphocyte homeostasis. This is Tumor necrosis factor receptor superfamily member 25 (TNFRSF25) from Homo sapiens (Human).